A 191-amino-acid chain; its full sequence is Fe/S biogenesis protein NfuA (191 aa).

Positions 149 and 152 each coordinate [4Fe-4S] cluster.

This sequence belongs to the NfuA family. As to quaternary structure, homodimer. [4Fe-4S] cluster is required as a cofactor.

In terms of biological role, involved in iron-sulfur cluster biogenesis. Binds a 4Fe-4S cluster, can transfer this cluster to apoproteins, and thereby intervenes in the maturation of Fe/S proteins. Could also act as a scaffold/chaperone for damaged Fe/S proteins. This is Fe/S biogenesis protein NfuA from Salmonella typhi.